The following is a 534-amino-acid chain: MEQYEVVEQIGRGAYGSAYLVVHKGERKRYVMKKIRLSKQNDKFQRTAYQEMSLMASLSNPYIVEYKDGWVDEGTSACIVTSYCEGGDMAERIKKARGVLFSEERVCRWFTQLLLALDYLHCNRVLHRDLKCSNILLTKDNNIRLADFGLAKLLMEDLASTIVGTPNYMCPEILADIPYGYKSDIWSLGCCMFEILAHRPAFKAADMASLINKINRSSISPMPPIYSSSLKQIVKSMLRKNPEHRPTAGELLRHPYLQPYLAESCSCSPIYLPVKPTKSNLGDKQQSRKPGSGRKRIIKTNGSSEALETAAEQAVDTRDNSTYISDVSTVGTQDACISQVSVDPQARNKAYQNIDDLTLFQQIEENLMTITDRQIDEAIFLKAVRTSSTVDVVPVSGAIQKPNEAPIPKEELTIGVVQEQRKEVKAHTHQGSKPGTGDVPIVTEESSPKSAVKLAHSDSTPAEWDHLNIVQQRADALESLLELCAKLLKQERLEELAGVLRPFGEGAVSSRETAIWLTKSLMTPPKLEGSPKLT.

Positions 4-257 (YEVVEQIGRG…AGELLRHPYL (254 aa)) constitute a Protein kinase domain. Residues 10–18 (IGRGAYGSA) and Lys-33 each bind ATP. The active-site Proton acceptor is Asp-129. 2 disordered regions span residues 278–306 (KSNL…SSEA) and 425–449 (KAHT…SSPK).

The protein belongs to the protein kinase superfamily. NEK Ser/Thr protein kinase family. NIMA subfamily. In terms of assembly, interacts with DIS1. Post-translationally, ubiquitinated by the E3 ligase DIS1. Ubiquitination of NEK6 leads to its degradation via the 26S proteasome-dependent pathway. In terms of tissue distribution, expressed in anthers, pistils and leaves.

Its subcellular location is the cytoplasm. It carries out the reaction L-seryl-[protein] + ATP = O-phospho-L-seryl-[protein] + ADP + H(+). The catalysed reaction is L-threonyl-[protein] + ATP = O-phospho-L-threonyl-[protein] + ADP + H(+). In terms of biological role, may be involved in plant development processes. The polypeptide is Serine/threonine-protein kinase Nek6 (Oryza sativa subsp. japonica (Rice)).